A 778-amino-acid polypeptide reads, in one-letter code: Exo-beta-D-glucosaminidase (778 aa).

Residues Y55, 104 to 105 (GE), 180 to 181 (DE), E308, E349, and Y381 contribute to the substrate site. The Proton donor role is filled by E181. Catalysis depends on E349, which acts as the Nucleophile.

It belongs to the glycosyl hydrolase 35 family. As to quaternary structure, homodimer.

It is found in the cytoplasm. The catalysed reaction is beta-D-glucosaminyl-(1-&gt;4)-N-acetyl-D-glucosamine + H2O = D-glucosamine + N-acetyl-D-glucosamine. It participates in glycan degradation; chitin degradation. Its function is as follows. Exo-type enzyme that specifically cleaves the non-reducing terminal glycosidic bond of chitooligosaccharides. Catalyzes the hydrolysis of GlcN-GlcNAc to glucosamine (GlcN) and N-acetylglucosamine (GlcNAc). Involved in chitin degradation. Can also hydrolyze chitosan and chitooligosaccharides of various chain lengths. The polypeptide is Exo-beta-D-glucosaminidase (Pyrococcus horikoshii (strain ATCC 700860 / DSM 12428 / JCM 9974 / NBRC 100139 / OT-3)).